An 837-amino-acid chain; its full sequence is Zinc fingers and homeoboxes protein 2 (837 aa).

The tract at residues 1–41 is disordered; it reads MASKRKSTTPCMVRTSQVVEQDVPEEVDRAKEKGIGTPQPD. Residues 27-77 are interaction with EFNB1; that stretch reads VDRAKEKGIGTPQPDVAKDCWAAELENSSKENEVIEVKSMGESQSKKLQGG. At T37 the chain carries Phosphothreonine. Residue K64 forms a Glycyl lysine isopeptide (Lys-Gly) (interchain with G-Cter in SUMO2) linkage. 2 consecutive C2H2-type zinc fingers follow at residues 78-101 and 110-133; these read YECKYCPYSTQNLNEFTEHVDMQH and YVCAECNFTTKKYDSLSDHNSKFH. Positions 167–180 are enriched in low complexity; that stretch reads TSGPGTGDSDSGIS. The tract at residues 167-203 is disordered; it reads TSGPGTGDSDSGISVSKTPIMKPGKPKADAKKVPKKP. Over residues 192-203 the composition is skewed to basic and acidic residues; that stretch reads PKADAKKVPKKP. A required for homodimerization region spans residues 195-358; it reads DAKKVPKKPE…PAQLAPTKVT (164 aa). 4 DNA-binding regions (homeobox) span residues 263–324, 439–501, 530–591, and 628–690; these read NTTK…WSPE, TPAS…IVHI, PQKF…EQAV, and SPSP…TVKW. The segment at 263–446 is required for repressor activity; that stretch reads NTTKYNSALD…PLTPASDRKK (184 aa). Residues 263–497 are required for interaction with NFYA; it reads NTTKYNSALD…SDHRYRCQRG (235 aa). The tract at residues 317-446 is required for nuclear localization; that stretch reads HGISWSPEEV…PLTPASDRKK (130 aa). Residues 404 to 445 form a disordered region; it reads GQKRPLVTPQAAPEPKRPHIAQVPEPPPKVANPPLTPASDRK. Over residues 427 to 439 the composition is skewed to pro residues; the sequence is PEPPPKVANPPLT. K455 participates in a covalent cross-link: Glycyl lysine isopeptide (Lys-Gly) (interchain with G-Cter in SUMO2). The tract at residues 754–837 is disordered; it reads EPAKDCLPAK…DCVPAEAGQA (84 aa). Phosphoserine is present on residues S825 and S827.

It belongs to the ZHX family. In terms of assembly, homodimer (via homeobox domain 1). Heterodimer with ZHX1 (via homeobox domain 1). Heterodimer with ZHX3 (via homeobox domain 1). Heterodimerization with ZHX1 is not necessary for repressor activity. Interacts (via homeobox domain) with NFYA (via N-terminus). Interacts with EFNB1 intracellular domain peptide; the interaction enhances ZHX2 transcriptional repression activity.

The protein resides in the nucleus. In terms of biological role, acts as a transcriptional repressor. Represses the promoter activity of the CDC25C gene stimulated by NFYA. May play a role in retinal development where it regulates the composition of bipolar cell populations, by promoting differentiation of bipolar OFF-type cells. In the brain, may promote maintenance and suppress differentiation of neural progenitor cells in the developing cortex. The chain is Zinc fingers and homeoboxes protein 2 (ZHX2) from Pongo abelii (Sumatran orangutan).